The chain runs to 93 residues: Early nodulin-36B (93 aa).

The polypeptide is Early nodulin-36B (Glycine max (Soybean)).